A 501-amino-acid chain; its full sequence is Probable cytosol aminopeptidase (501 aa).

Mn(2+)-binding residues include K268 and D273. The active site involves K280. Mn(2+) is bound by residues D291, D350, and E352. The active site involves R354.

It belongs to the peptidase M17 family. Mn(2+) serves as cofactor.

Its subcellular location is the cytoplasm. The catalysed reaction is Release of an N-terminal amino acid, Xaa-|-Yaa-, in which Xaa is preferably Leu, but may be other amino acids including Pro although not Arg or Lys, and Yaa may be Pro. Amino acid amides and methyl esters are also readily hydrolyzed, but rates on arylamides are exceedingly low.. It carries out the reaction Release of an N-terminal amino acid, preferentially leucine, but not glutamic or aspartic acids.. Its function is as follows. Presumably involved in the processing and regular turnover of intracellular proteins. Catalyzes the removal of unsubstituted N-terminal amino acids from various peptides. This chain is Probable cytosol aminopeptidase, found in Idiomarina loihiensis (strain ATCC BAA-735 / DSM 15497 / L2-TR).